The sequence spans 428 residues: F-box/LRR-repeat protein 3 (428 aa).

A compositionally biased stretch (basic and acidic residues) spans 1 to 21; that stretch reads MKRGGRDSDRNSSEEGTAEKS. Positions 1 to 27 are disordered; that stretch reads MKRGGRDSDRNSSEEGTAEKSKKLRTT. In terms of domain architecture, F-box spans 34-81; it reads CDWGNLLQDIILQVFKYLPLLDRAHASQVCRNWNQVFHMPDLWRCFEF. LRR repeat units follow at residues 119-146, 181-207, 208-233, 234-259, 316-341, 343-368, and 369-394; these read SSKESAEAACDILSQLVNCSLKTLGLIS, DTPVDDPSLKVLVANNSDTLKLLKMSS, CPHVSPAGILCVADQCHGLRELALNY, HLLSDELLLALSSEKHVRLEHLRIDV, GRSVSKDVLGRVGMTCPRLVELVVCA, GLRPLDEELIRIAERCKNLSAIGLGE, and CEVSCSAFVEFVKMCGGRLSQLSIME.

Part of the SCF (SKP1-CUL1-F-box) E3 ubiquitin-protein ligase complex SCF(FBXL3) composed of CUL1, SKP1, RBX1 and FBXL3. Interacts with CRY1 and CRY2 (phosphorylated). Interacts with HDAC3. Interacts with KDM8. In terms of processing, undergoes autophagy-mediated degradation in the liver in a time-dependent manner. In terms of tissue distribution, widely expressed.

The protein resides in the nucleus. It is found in the cytoplasm. It participates in protein modification; protein ubiquitination. Functionally, substrate-recognition component of the SCF(FBXL3) E3 ubiquitin ligase complex involved in circadian rhythm function. Plays a key role in the maintenance of both the speed and the robustness of the circadian clock oscillation. The SCF(FBXL3) complex mainly acts in the nucleus and mediates ubiquitination and subsequent degradation of CRY1 and CRY2. Activity of the SCF(FBXL3) complex is counteracted by the SCF(FBXL21) complex. This chain is F-box/LRR-repeat protein 3 (FBXL3), found in Homo sapiens (Human).